A 593-amino-acid polypeptide reads, in one-letter code: NADH-quinone oxidoreductase subunit C/D (593 aa).

The NADH dehydrogenase I subunit C stretch occupies residues 1–184; it reads MTADSALYIP…DPYSLSAAKQ (184 aa). Positions 208–593 are NADH dehydrogenase I subunit D; it reads DYMFLNLGPN…IDFVMADVDR (386 aa).

In the N-terminal section; belongs to the complex I 30 kDa subunit family. This sequence in the C-terminal section; belongs to the complex I 49 kDa subunit family. In terms of assembly, NDH-1 is composed of 13 different subunits. Subunits NuoB, CD, E, F, and G constitute the peripheral sector of the complex.

The protein localises to the cell inner membrane. The catalysed reaction is a quinone + NADH + 5 H(+)(in) = a quinol + NAD(+) + 4 H(+)(out). NDH-1 shuttles electrons from NADH, via FMN and iron-sulfur (Fe-S) centers, to quinones in the respiratory chain. The immediate electron acceptor for the enzyme in this species is believed to be ubiquinone. Couples the redox reaction to proton translocation (for every two electrons transferred, four hydrogen ions are translocated across the cytoplasmic membrane), and thus conserves the redox energy in a proton gradient. In Pseudomonas paraeruginosa (strain DSM 24068 / PA7) (Pseudomonas aeruginosa (strain PA7)), this protein is NADH-quinone oxidoreductase subunit C/D.